The primary structure comprises 394 residues: Elongation factor Tu (394 aa).

In terms of domain architecture, tr-type G spans 10–205; the sequence is KPHVNIGTIG…VDTWIPLPPR (196 aa). The G1 stretch occupies residues 19-26; the sequence is GHVDHGKT. 19–26 is a binding site for GTP; that stretch reads GHVDHGKT. Residue Thr-26 participates in Mg(2+) binding. The G2 stretch occupies residues 60–64; sequence GITIN. The interval 81 to 84 is G3; that stretch reads DCPG. Residues 81-85 and 136-139 each bind GTP; these read DCPGH and NKCD. Residues 136-139 form a G4 region; the sequence is NKCD. The G5 stretch occupies residues 174-176; it reads SAL.

The protein belongs to the TRAFAC class translation factor GTPase superfamily. Classic translation factor GTPase family. EF-Tu/EF-1A subfamily. As to quaternary structure, monomer.

It localises to the cytoplasm. The enzyme catalyses GTP + H2O = GDP + phosphate + H(+). Its function is as follows. GTP hydrolase that promotes the GTP-dependent binding of aminoacyl-tRNA to the A-site of ribosomes during protein biosynthesis. In Phocaeicola vulgatus (strain ATCC 8482 / DSM 1447 / JCM 5826 / CCUG 4940 / NBRC 14291 / NCTC 11154) (Bacteroides vulgatus), this protein is Elongation factor Tu.